The following is a 518-amino-acid chain: Zinc finger protein 449 (518 aa).

The region spanning 30-112 (RQRFRQFQYR…SLIEDLQREL (83 aa)) is the SCAN box domain. The span at 292–304 (NPTLGETPENSNL) shows a compositional bias: polar residues. A disordered region spans residues 292–325 (NPTLGETPENSNLEEPLNPKPHKKKSPGEKPHRC). 7 consecutive C2H2-type zinc fingers follow at residues 323–345 (HRCP…QRIH), 351–373 (HKCP…QRLH), 379–401 (YECT…QRTH), 407–429 (YKCL…LKTH), 435–457 (HRCH…QRTH), 463–485 (FKCN…LRIH), and 491–513 (YKCT…QVTH).

The protein belongs to the krueppel C2H2-type zinc-finger protein family.

The protein resides in the nucleus. May be involved in transcriptional regulation. In Homo sapiens (Human), this protein is Zinc finger protein 449 (ZNF449).